Reading from the N-terminus, the 88-residue chain is Large ribosomal subunit protein bL31B (88 aa).

This sequence belongs to the bacterial ribosomal protein bL31 family. Type B subfamily. Part of the 50S ribosomal subunit.

In Bordetella pertussis (strain Tohama I / ATCC BAA-589 / NCTC 13251), this protein is Large ribosomal subunit protein bL31B.